Consider the following 327-residue polypeptide: Clavesin-2 (327 aa).

The CRAL-TRIO domain maps to isoleucine 96–aspartate 257. Positions glutamate 287 to aspartate 327 are disordered. Residue serine 325 is modified to Phosphoserine.

As to quaternary structure, forms a complex with clathrin heavy chain and gamma-adaptin.

It localises to the golgi apparatus. It is found in the trans-Golgi network membrane. The protein localises to the cytoplasmic vesicle. The protein resides in the clathrin-coated vesicle. Its subcellular location is the early endosome membrane. Required for normal morphology of late endosomes and/or lysosomes in neurons. Binds phosphatidylinositol 3,5-bisphosphate (PtdIns(3,5)P2). The chain is Clavesin-2 (CLVS2) from Homo sapiens (Human).